The sequence spans 709 residues: Protein IMPAIRED IN BABA-INDUCED STERILITY 1 (709 aa).

Gly2 carries the N-myristoyl glycine lipid modification. The tract at residues 53-80 is disordered; it reads SGKKSSSKKSGSELGSDFGELSESGRAS. The region spanning 131 to 418 is the Protein kinase domain; the sequence is FEKLEKIGQG…ASTALVSQYF (288 aa). ATP contacts are provided by residues 137 to 145 and Lys160; that span reads IGQGTYSSV. Asp255 serves as the catalytic Proton acceptor. Disordered stretches follow at residues 434 to 536 and 566 to 609; these read SPSK…PFSG and SRGH…QDRE. Residues 437–449 show a composition bias toward basic and acidic residues; the sequence is KEIDAKHREDTTR. Over residues 484 to 494 the composition is skewed to basic residues; that stretch reads HSQKFQKRNGH. A compositionally biased stretch (polar residues) spans 495–505; that stretch reads SVHNSIDSDST. Basic and acidic residues-rich tracts occupy residues 509–523 and 586–609; these read KMQK…EASH and VDSK…QDRE.

This sequence belongs to the protein kinase superfamily. Ser/Thr protein kinase family.

In terms of biological role, required for beta-aminobutyric acid (BABA)-induced resistance (BABA-IR) against bacteria (e.g. P.syringae) and oomycetes (e.g. H.parasitica) via priming for salicylate (SA)-dependent defense responses such as pathogenesis-related PR-1 gene expression and trailing necrosis. Involved in BABA-mediated sterility. Necessary for the inheritance of BABA-priming to next generation, especially for the primed to be primed phenotype which consists in an enhanced second BABA-priming in transgenerationally primed plants. The sequence is that of Protein IMPAIRED IN BABA-INDUCED STERILITY 1 from Arabidopsis thaliana (Mouse-ear cress).